The primary structure comprises 146 residues: Hemoglobin subunit beta (146 aa).

The Globin domain occupies 2-146; the sequence is HWSAEEKQLI…VAHSLARVYH (145 aa). Heme b contacts are provided by His-63 and His-92.

The protein belongs to the globin family. Heterotetramer of two alpha chains and two beta chains. In terms of tissue distribution, red blood cells.

Its function is as follows. Involved in oxygen transport from the lung to the various peripheral tissues. The chain is Hemoglobin subunit beta (HBB) from Microcephalophis gracilis (Graceful small-headed sea snake).